Consider the following 484-residue polypeptide: Argininosuccinate lyase (484 aa).

The protein belongs to the lyase 1 family. Argininosuccinate lyase subfamily.

The protein localises to the cytoplasm. The catalysed reaction is 2-(N(omega)-L-arginino)succinate = fumarate + L-arginine. It participates in amino-acid biosynthesis; L-arginine biosynthesis; L-arginine from L-ornithine and carbamoyl phosphate: step 3/3. The protein is Argininosuccinate lyase of Methanocaldococcus jannaschii (strain ATCC 43067 / DSM 2661 / JAL-1 / JCM 10045 / NBRC 100440) (Methanococcus jannaschii).